Reading from the N-terminus, the 117-residue chain is UPF0344 protein GK0697 (117 aa).

4 consecutive transmembrane segments (helical) span residues 1–21 (MTHA…LAVS), 39–59 (LFYI…ASIS), 60–80 (ALYW…EMVL), and 97–117 (VIAL…FDLF).

The protein belongs to the UPF0344 family.

It is found in the cell membrane. The sequence is that of UPF0344 protein GK0697 from Geobacillus kaustophilus (strain HTA426).